A 284-amino-acid chain; its full sequence is Protoheme IX farnesyltransferase (284 aa).

Helical transmembrane passes span 13-33 (IIIG…FPFF), 35-55 (VFLF…SCIF), 87-107 (IFAS…VNIL), 108-128 (SMFL…FFLK), 133-153 (YSTF…HTAI), 162-182 (FLLF…IAIL), 224-244 (FLGY…FYWL), and 264-284 (FYYS…DFIF).

This sequence belongs to the UbiA prenyltransferase family. Protoheme IX farnesyltransferase subfamily.

The protein localises to the cell membrane. It carries out the reaction heme b + (2E,6E)-farnesyl diphosphate + H2O = Fe(II)-heme o + diphosphate. It functions in the pathway porphyrin-containing compound metabolism; heme O biosynthesis; heme O from protoheme: step 1/1. Its function is as follows. Converts heme B (protoheme IX) to heme O by substitution of the vinyl group on carbon 2 of heme B porphyrin ring with a hydroxyethyl farnesyl side group. The chain is Protoheme IX farnesyltransferase from Buchnera aphidicola subsp. Schizaphis graminum (strain Sg).